Consider the following 331-residue polypeptide: Ketol-acid reductoisomerase (NADP(+)) (331 aa).

The KARI N-terminal Rossmann domain occupies 2–182; sequence AKLFYDSDAD…GGTRAGILET (181 aa). NADP(+) contacts are provided by residues 25–28, serine 51, serine 53, and 83–86; these read YGSQ and DEFQ. Histidine 108 is an active-site residue. Residue glycine 134 participates in NADP(+) binding. Residues 183 to 328 enclose the KARI C-terminal knotted domain; that stretch reads NFKEETETDL…KTLRSMFSWL (146 aa). 4 residues coordinate Mg(2+): aspartate 191, glutamate 195, glutamate 227, and glutamate 231. Serine 252 contacts substrate.

The protein belongs to the ketol-acid reductoisomerase family. Mg(2+) is required as a cofactor.

It catalyses the reaction (2R)-2,3-dihydroxy-3-methylbutanoate + NADP(+) = (2S)-2-acetolactate + NADPH + H(+). It carries out the reaction (2R,3R)-2,3-dihydroxy-3-methylpentanoate + NADP(+) = (S)-2-ethyl-2-hydroxy-3-oxobutanoate + NADPH + H(+). It functions in the pathway amino-acid biosynthesis; L-isoleucine biosynthesis; L-isoleucine from 2-oxobutanoate: step 2/4. The protein operates within amino-acid biosynthesis; L-valine biosynthesis; L-valine from pyruvate: step 2/4. In terms of biological role, involved in the biosynthesis of branched-chain amino acids (BCAA). Catalyzes an alkyl-migration followed by a ketol-acid reduction of (S)-2-acetolactate (S2AL) to yield (R)-2,3-dihydroxy-isovalerate. In the isomerase reaction, S2AL is rearranged via a Mg-dependent methyl migration to produce 3-hydroxy-3-methyl-2-ketobutyrate (HMKB). In the reductase reaction, this 2-ketoacid undergoes a metal-dependent reduction by NADPH to yield (R)-2,3-dihydroxy-isovalerate. The chain is Ketol-acid reductoisomerase (NADP(+)) from Prochlorococcus marinus (strain NATL1A).